A 140-amino-acid polypeptide reads, in one-letter code: Holo-[acyl-carrier-protein] synthase (140 aa).

Residues Asp-8 and Glu-62 each contribute to the Mg(2+) site.

It belongs to the P-Pant transferase superfamily. AcpS family. Mg(2+) serves as cofactor.

Its subcellular location is the cytoplasm. The catalysed reaction is apo-[ACP] + CoA = holo-[ACP] + adenosine 3',5'-bisphosphate + H(+). Its function is as follows. Transfers the 4'-phosphopantetheine moiety from coenzyme A to a Ser of acyl-carrier-protein. The chain is Holo-[acyl-carrier-protein] synthase from Cupriavidus taiwanensis (strain DSM 17343 / BCRC 17206 / CCUG 44338 / CIP 107171 / LMG 19424 / R1) (Ralstonia taiwanensis (strain LMG 19424)).